Reading from the N-terminus, the 392-residue chain is Acyl-CoA dehydrogenase IpdE1 (392 aa).

FAD contacts are provided by residues 126-129 (QGYS) and serine 171. Glutamate 254 (proton acceptor) is an active-site residue. 371–373 (SNE) is an FAD binding site.

This sequence belongs to the acyl-CoA dehydrogenase family. Heterotetramer composed of 2 IpdE1 subunits and 2 IpdE2 subunits. FAD is required as a cofactor.

It catalyses the reaction 3-[(3aS,4S,5R,7aS)-5-hydroxy-7a-methyl-1-oxo-octahydro-1H-inden-4-yl]propanoyl-CoA + A = (2E)-3-[(3aS,4S,5R,7aS)-5-hydroxy-7a-methyl-1-oxo-octahydro-1H-inden-4-yl]prop-2-enoyl-CoA + AH2. It functions in the pathway steroid metabolism; cholesterol degradation. Functionally, involved in cholesterol degradation. Catalyzes the dehydrogenation of 5OH-HIP-CoA to 5OH-HIPE-CoA. In Mycolicibacterium smegmatis (strain ATCC 700084 / mc(2)155) (Mycobacterium smegmatis), this protein is Acyl-CoA dehydrogenase IpdE1.